We begin with the raw amino-acid sequence, 201 residues long: Recombination protein RecR (201 aa).

The C4-type zinc finger occupies 57 to 74 (CRICGFITSKDDDPCVIC). One can recognise a Toprim domain in the interval 82–178 (SKIFVVENSQ…KVTRLARGLS (97 aa)).

This sequence belongs to the RecR family.

Functionally, may play a role in DNA repair. It seems to be involved in an RecBC-independent recombinational process of DNA repair. It may act with RecF and RecO. This is Recombination protein RecR from Oenococcus oeni (strain ATCC BAA-331 / PSU-1).